We begin with the raw amino-acid sequence, 611 residues long: MPPPPPQRPASSHVGRANLFSASPPPLSNRRYPHHRSLPLPPVSPRRRDPKKHSQQPSQEEPTDSGPTRTVTTNPAFRAAHLRTAYRKPVPPAAAAGEGEALLAADPTDAASGRAVVVGPSGLSFRLPGAPFDFQFSYSEAPRAPPLAIREPAFLPFAPPTMPRPWTGKAPLLTKEEKARRRGVRLHTPLGQETPQTVSAHGIMMEVRERRKMDLARVSPGDGRSREEVLGEPLTPSEVRALVKPHISHNRQLNIGRDGLTHNMLEMIHCHWRRQEICKVRCRGVPTVDMKNLCYHLEEKSGGKVIHRVGGVVFLYRGRHYDPKTRPRYPLMLWKPATPVYPKLIKEAPDGFTKEEADEMRRKGRDLLPICKLAKNGIYITLVKDVRDAFEGSDLVKIDCEGLNPSDYKKIGAKLRDLVPCVLLSFDDEQILMHRGKEWKSRYSKPLTLIPKVPKNNLAMTSVMNSSDEVSDANTQVAIREVLRPKMFKLWKSAVDSSLALLLDDAEANNLTPDSLLTLVEEFSVTSQAVEHSFPALLVTNGDASTDSLSAEYMNDEPETSVAGNEEGQLEQSPDLRDDEHFDVDMFERLESSVPLGSLPIDSMIERLNSE.

The transit peptide at M1–S58 directs the protein to the chloroplast. Residues M1–T72 form a disordered region. The span at Q55 to T72 shows a compositional bias: polar residues. 2 CRM domains span residues E232–R328 and D350–P446. Residues K486–N509 are CRS2 binding. Residues M554–D578 form a disordered region.

In terms of assembly, interacts with CRS2 and RNA. Part of large ribonucleo-protein complexes that include group IIB introns, CRS2 and CAF2.

It localises to the plastid. Its subcellular location is the chloroplast stroma. Functionally, required for the splicing of group IIB introns in chloroplasts. Forms splicing particles with CRS2. Interacts with RNA and confers intron specificity of the splicing particles. This Zea mays (Maize) protein is CRS2-associated factor 2, chloroplastic (CAF2).